We begin with the raw amino-acid sequence, 115 residues long: MAGTVLGVGAGVFVLALLWVSVLLLCALLFRASGAARFSVIFVFLGALIVTAILLLFPRASDAPAPEAETKIVDAFFIGRYVLLAFLTAVFLGSLFLVLIHHILEPIYAKPLRSY.

The next 3 membrane-spanning stretches (helical) occupy residues alanine 10–phenylalanine 30, phenylalanine 38–proline 58, and tyrosine 81–histidine 101.

The protein belongs to the TMEM218 family. Interacts with TMEM67.

It localises to the membrane. Its subcellular location is the cell projection. The protein resides in the cilium. Its function is as follows. May be involved in ciliary biogenesis or function. This Bos taurus (Bovine) protein is Transmembrane protein 218 (TMEM218).